The chain runs to 240 residues: Phosphoribosylaminoimidazole-succinocarboxamide synthase (240 aa).

Belongs to the SAICAR synthetase family.

It carries out the reaction 5-amino-1-(5-phospho-D-ribosyl)imidazole-4-carboxylate + L-aspartate + ATP = (2S)-2-[5-amino-1-(5-phospho-beta-D-ribosyl)imidazole-4-carboxamido]succinate + ADP + phosphate + 2 H(+). It participates in purine metabolism; IMP biosynthesis via de novo pathway; 5-amino-1-(5-phospho-D-ribosyl)imidazole-4-carboxamide from 5-amino-1-(5-phospho-D-ribosyl)imidazole-4-carboxylate: step 1/2. The chain is Phosphoribosylaminoimidazole-succinocarboxamide synthase from Wigglesworthia glossinidia brevipalpis.